The sequence spans 218 residues: Copper acquisition factor BIM1 (218 aa).

Residues 1-19 (MFALKSILVTSLITSTALA) form the signal peptide. Positions 20 and 65 each coordinate Cu(2+). 3 N-linked (GlcNAc...) asparagine glycosylation sites follow: Asn87, Asn91, and Asn124. Asp138 is a Cu(2+) binding site. Residues Asn158 and Asn170 are each glycosylated (N-linked (GlcNAc...) asparagine). The interval 160 to 194 (TCTNDASKASNATSTSSGSATATSAAATSSSSGTS) is disordered. The span at 165–194 (ASKASNATSTSSGSATATSAAATSSSSGTS) shows a compositional bias: low complexity. Ser190 is lipidated: GPI-anchor amidated serine. Residues 191–218 (SGTSGAIKEVVGFGALSLALGIAGLIIL) constitute a propeptide, removed in mature form.

This sequence belongs to the X325 family. In terms of assembly, interacts with the CUF1-dependent copper transporter CTR1. The cofactor is Cu(2+).

Its subcellular location is the cell membrane. Functionally, lytic polysaccharide monooxygenase-like protein that has diverged to biological functions other than polysaccharide degradation since it does not perform oxidative cleavage of polysaccharides. Cell surface-bound protein that functions in the copper-accumulation pathway shared by the CUF1-dependent copper transporter CTR1. Involved in maintaining cell wall integrity during copper deficiency. Binds Cu(2+) with an estimated 1:1 stoichiometry and might serve as an extracellular copper ligand. FRE4 and FRE7 metalloreductases probably function together with CTR1 and BIM1 to liberate the Cu(2+) bound to the BIM1 copper-binding site for subsequent import of Cu(+) into the cell by CTR1, via the reduction of BIM1-bound Cu(2+) to Cu(+) to reduce binding affinity for BIM1 but increase affinity for CTR1. Facilitates copper acquisition in the brain of mammalian hosts and acts as a copper-dependent virulence trait in fungal meningitis. While BIM1 plays a critical role in cryptococcal meningitis, at least in part through its role in copper acquisition, it could play additional roles during copper limitation or as a means to invade and colonize host tissues in the brain, by compromising host carbohydrate integrity via its lytic polysaccharide monooxygenase (LPMO) activity, which has still to be determined. This Cryptococcus neoformans var. grubii serotype A (strain H99 / ATCC 208821 / CBS 10515 / FGSC 9487) (Filobasidiella neoformans var. grubii) protein is Copper acquisition factor BIM1.